The sequence spans 523 residues: Leucine-rich repeat transmembrane neuronal protein 1 (523 aa).

The first 34 residues, 1 to 34 (MDFLLLGLCLHWLLRRPSGVVLCLLGACFQMLPA), serve as a signal peptide directing secretion. Positions 35 to 63 (APSGCPGQCRCEGRLLYCEALNLTEAPHN) constitute an LRRNT domain. Residues 35 to 428 (APSGCPGQCR…HAENAVQIHK (394 aa)) lie on the Extracellular side of the membrane. 2 N-linked (GlcNAc...) asparagine glycosylation sites follow: asparagine 56 and asparagine 63. LRR repeat units lie at residues 64–87 (LSGL…QFTG), 89–111 (MQLT…AFQK), 112–135 (LRRV…TFRP), 136–159 (MPNL…LFHG), 161–183 (RKLT…IFQD), 184–207 (CRSL…SFAG), 209–231 (FKLT…HFPR), 233–255 (ISLN…LDWV), 256–278 (WNLE…VFET), and 280–302 (PYLQ…ILNS). N-linked (GlcNAc...) asparagine glycosylation occurs at asparagine 130. The LRRCT domain maps to 314–365 (NLWDCGRNVCALASWLSNFQGRYDANLQCASPEYAQGEDVLDAVYAFHLCED). Residue asparagine 381 is glycosylated (N-linked (GlcNAc...) asparagine). Residues 429–449 (VVTGTMALIFSFLIVVLVLYV) form a helical membrane-spanning segment. Residues 450 to 523 (SWKCFPASLR…HQQPARECEV (74 aa)) lie on the Cytoplasmic side of the membrane. The short motif at 520-523 (ECEV) is the May be involved in DLG4-binding element.

The protein belongs to the LRRTM family. Interacts with DLG4.

It localises to the cell membrane. Its subcellular location is the postsynaptic cell membrane. Functionally, exhibits strong synaptogenic activity, restricted to excitatory presynaptic differentiation, acting at both pre- and postsynaptic level. This is Leucine-rich repeat transmembrane neuronal protein 1 (Lrrtm1) from Rattus norvegicus (Rat).